The primary structure comprises 235 residues: Auracyanin-B (235 aa).

Over residues 1–21 the composition is skewed to low complexity; the sequence is MSWRGSGRSNFRSRSSSNGGS. Disordered stretches follow at residues 1–27 and 64–107; these read MSWR…SGGS and ATPR…NVVN. The signal sequence occupies residues 1-56; that stretch reads MSWRGSGRSNFRSRSSSNGGSTFSGGSAGGPPLIVMMGLAFGAGLIMLIVMIASNA. Residues 57–80 constitute a propeptide that is removed on maturation; that stretch reads TAGGFVAATPRPTATPRPTAAPAP. Over residues 69 to 86 the composition is skewed to pro residues; that stretch reads TATPRPTAAPAPTQPPAA. A compositionally biased stretch (low complexity) spans 87–100; it reads QPTTAPATQAANAP. A Plastocyanin-like domain is found at 111–235; it reads AQTVEVRAAP…GMKGTLTVTP (125 aa). 4 residues coordinate Cu cation: His152, Cys217, His222, and Met227.

Belongs to the multicopper oxidase family. Requires Cu cation as cofactor. Post-translationally, glycosylated.

It localises to the cell membrane. Its function is as follows. Probably a soluble electron acceptor for the integral membrane protein electron transfer alternative complex III (ACIII). In Chloroflexus aurantiacus (strain ATCC 29366 / DSM 635 / J-10-fl), this protein is Auracyanin-B.